The sequence spans 248 residues: MSFPYFISPEQAMRERSELARKGIARAKSVVALAYAGGVLFVAENPSRSLQKISELYDRVGFAAAGKFNEFDNLRRGGIQFADTRGYAYDRRDVTGRQLANVYAQTLGTIFTEQAKPYEVELCVAEVAHYGETKPPELYRITYDGSIADEPHFVVMGGTTEPIANALKESYAENASLTDALRIAVAALRAGSADTSGGDQPTLGVASLEVAVLDANRPRRAFRRITGSALQALLVDQESPQSDGESSG.

Serine 2 carries the N-acetylserine; partial modification.

It belongs to the peptidase T1A family. The 20S proteasome core is composed of 14 alpha and 14 beta subunits that assemble into four stacked heptameric rings, resulting in a barrel-shaped structure. The two inner rings, each composed of seven catalytic beta subunits, are sandwiched by two outer rings, each composed of seven alpha subunits. The catalytic chamber with the active sites is on the inside of the barrel. Has a gated structure, the ends of the cylinder being occluded by the N-termini of the alpha-subunits. Is capped by the proteasome-associated ATPase, ARC.

It is found in the cytoplasm. Its pathway is protein degradation; proteasomal Pup-dependent pathway. With respect to regulation, the formation of the proteasomal ATPase ARC-20S proteasome complex, likely via the docking of the C-termini of ARC into the intersubunit pockets in the alpha-rings, may trigger opening of the gate for substrate entry. Interconversion between the open-gate and close-gate conformations leads to a dynamic regulation of the 20S proteasome proteolysis activity. Functionally, component of the proteasome core, a large protease complex with broad specificity involved in protein degradation. This is Proteasome subunit alpha from Mycobacterium tuberculosis (strain CDC 1551 / Oshkosh).